A 368-amino-acid chain; its full sequence is MFSGLHTSKYACQVVVQIRTATKRAAGSRTSMKDSAGRRLGPKKYEGQDVKPGEIIMRQRGTKFYPGENVKIGRDHTIYAVEPGVVRYYLDPFHPYRKFIGVALSRDMKLPKPHFEPNVRRFGRIELDNPKAIAKEENALSRKEYLSRDTLLKDLTEREAKRHEMMDNYWNFISSELKLNIIPERKEMASNYLLRYRTGLKNGFDLQEAQFNAKYYLQQMLKLKAKRKEWNEEKLSEQLHNLDETTALLNKSVSFSNKWVIIPYISEEEKLTRKDELIKKLTELGTAIKSKSDKKAVLELFKDASHFLTQAQEVRLRRQFMKPVQPEIMNVNVAEKADKKTTVIRRFNYEKSKIDIIPRTKTAFFKRL.

The transit peptide at 1–20 directs the protein to the mitochondrion; it reads MFSGLHTSKYACQVVVQIRT. Residues 23-44 form a disordered region; that stretch reads KRAAGSRTSMKDSAGRRLGPKK. Residues 31-44 show a composition bias toward basic and acidic residues; the sequence is SMKDSAGRRLGPKK.

This sequence belongs to the bacterial ribosomal protein bL27 family.

Its subcellular location is the mitochondrion. Functionally, component of the large subunit of mitochondrial ribosome. The sequence is that of Large ribosomal subunit protein bL27m (MRPL2) from Candida glabrata (strain ATCC 2001 / BCRC 20586 / JCM 3761 / NBRC 0622 / NRRL Y-65 / CBS 138) (Yeast).